Here is a 175-residue protein sequence, read N- to C-terminus: Adenine phosphoribosyltransferase (175 aa).

Belongs to the purine/pyrimidine phosphoribosyltransferase family. In terms of assembly, homodimer.

It is found in the cytoplasm. The enzyme catalyses AMP + diphosphate = 5-phospho-alpha-D-ribose 1-diphosphate + adenine. It functions in the pathway purine metabolism; AMP biosynthesis via salvage pathway; AMP from adenine: step 1/1. In terms of biological role, catalyzes a salvage reaction resulting in the formation of AMP, that is energically less costly than de novo synthesis. This Francisella tularensis subsp. tularensis (strain FSC 198) protein is Adenine phosphoribosyltransferase.